The following is a 626-amino-acid chain: Elongation factor 4 (626 aa).

Positions 14–195 (SLIRNFCIIA…RIVVDVPAPT (182 aa)) constitute a tr-type G domain. Residues 26–31 (DHGKST) and 142–145 (NKID) each bind GTP. The segment at 603–626 (LSTGEGGNDRDTKDKIRAAQKSEG) is disordered. The segment covering 609–626 (GNDRDTKDKIRAAQKSEG) has biased composition (basic and acidic residues).

Belongs to the TRAFAC class translation factor GTPase superfamily. Classic translation factor GTPase family. LepA subfamily.

The protein localises to the cell membrane. It catalyses the reaction GTP + H2O = GDP + phosphate + H(+). Its function is as follows. Required for accurate and efficient protein synthesis under certain stress conditions. May act as a fidelity factor of the translation reaction, by catalyzing a one-codon backward translocation of tRNAs on improperly translocated ribosomes. Back-translocation proceeds from a post-translocation (POST) complex to a pre-translocation (PRE) complex, thus giving elongation factor G a second chance to translocate the tRNAs correctly. Binds to ribosomes in a GTP-dependent manner. The polypeptide is Elongation factor 4 (Bifidobacterium animalis subsp. lactis (strain AD011)).